The following is a 459-amino-acid chain: Bifunctional protein GlmU (459 aa).

Positions 1–229 (MSNFAIILAA…FDESLGVNDR (229 aa)) are pyrophosphorylase. UDP-N-acetyl-alpha-D-glucosamine is bound by residues 8–11 (LAAG), Lys22, Gln72, and 77–78 (GT). Residue Asp102 participates in Mg(2+) binding. UDP-N-acetyl-alpha-D-glucosamine contacts are provided by Gly139, Glu154, Asn169, and Asn227. Residue Asn227 coordinates Mg(2+). The segment at 230-250 (VALATAESVMRRRINHKHMVN) is linker. Residues 251–459 (GVSFVNPEAT…TRLPHHPKNQ (209 aa)) form an N-acetyltransferase region. UDP-N-acetyl-alpha-D-glucosamine is bound by residues Arg332 and Lys350. Residue His362 is the Proton acceptor of the active site. UDP-N-acetyl-alpha-D-glucosamine is bound by residues Tyr365 and Asn376. Residues Ala379, 385-386 (NY), Ser404, Ala422, and Arg439 contribute to the acetyl-CoA site.

It in the N-terminal section; belongs to the N-acetylglucosamine-1-phosphate uridyltransferase family. In the C-terminal section; belongs to the transferase hexapeptide repeat family. In terms of assembly, homotrimer. Mg(2+) is required as a cofactor.

The protein localises to the cytoplasm. It carries out the reaction alpha-D-glucosamine 1-phosphate + acetyl-CoA = N-acetyl-alpha-D-glucosamine 1-phosphate + CoA + H(+). The catalysed reaction is N-acetyl-alpha-D-glucosamine 1-phosphate + UTP + H(+) = UDP-N-acetyl-alpha-D-glucosamine + diphosphate. The protein operates within nucleotide-sugar biosynthesis; UDP-N-acetyl-alpha-D-glucosamine biosynthesis; N-acetyl-alpha-D-glucosamine 1-phosphate from alpha-D-glucosamine 6-phosphate (route II): step 2/2. It functions in the pathway nucleotide-sugar biosynthesis; UDP-N-acetyl-alpha-D-glucosamine biosynthesis; UDP-N-acetyl-alpha-D-glucosamine from N-acetyl-alpha-D-glucosamine 1-phosphate: step 1/1. It participates in bacterial outer membrane biogenesis; LPS lipid A biosynthesis. In terms of biological role, catalyzes the last two sequential reactions in the de novo biosynthetic pathway for UDP-N-acetylglucosamine (UDP-GlcNAc). The C-terminal domain catalyzes the transfer of acetyl group from acetyl coenzyme A to glucosamine-1-phosphate (GlcN-1-P) to produce N-acetylglucosamine-1-phosphate (GlcNAc-1-P), which is converted into UDP-GlcNAc by the transfer of uridine 5-monophosphate (from uridine 5-triphosphate), a reaction catalyzed by the N-terminal domain. The protein is Bifunctional protein GlmU of Streptococcus pneumoniae (strain 70585).